Reading from the N-terminus, the 135-residue chain is Calcium-binding protein KIC (135 aa).

Residues 74 to 109 (MSKEDAQGMVREGDLDGDGALNQTEFCVLMVRLSPE) form the EF-hand domain. Residues Asp-87, Asp-89, Asp-91, and Glu-98 each contribute to the Ca(2+) site.

As to quaternary structure, interacts with KCBP (via C-terminus). KIC and calmodulin show competitive binding to KCBP. Interacts with CML42. Binds to ABCG36. As to expression, expressed in stems, leaves and flowers.

In terms of biological role, calcium-binding regulatory protein that interacts with kinesin motor protein KCBP in a calcium-dependent manner. Inhibits KCBP microtubule binding activity and microtubule-stimulated ATPase activity. Involved in the regulation of trichome branching through its interaction with KCBP. The polypeptide is Calcium-binding protein KIC (Arabidopsis thaliana (Mouse-ear cress)).